The following is a 400-amino-acid chain: Formate-dependent phosphoribosylglycinamide formyltransferase (400 aa).

N(1)-(5-phospho-beta-D-ribosyl)glycinamide is bound by residues 22-23 (EL) and Glu82. Residues Arg115, Lys156, 161–166 (SSGKGQ), 196–199 (EGFI), and Glu204 each bind ATP. An ATP-grasp domain is found at 120 to 309 (RLAAETLCLP…EFALHARAIL (190 aa)). Glu268 and Glu280 together coordinate Mg(2+). N(1)-(5-phospho-beta-D-ribosyl)glycinamide contacts are provided by residues Asp287, Lys361, and 368–369 (RR).

The protein belongs to the PurK/PurT family. In terms of assembly, homodimer.

It carries out the reaction N(1)-(5-phospho-beta-D-ribosyl)glycinamide + formate + ATP = N(2)-formyl-N(1)-(5-phospho-beta-D-ribosyl)glycinamide + ADP + phosphate + H(+). The protein operates within purine metabolism; IMP biosynthesis via de novo pathway; N(2)-formyl-N(1)-(5-phospho-D-ribosyl)glycinamide from N(1)-(5-phospho-D-ribosyl)glycinamide (formate route): step 1/1. Functionally, involved in the de novo purine biosynthesis. Catalyzes the transfer of formate to 5-phospho-ribosyl-glycinamide (GAR), producing 5-phospho-ribosyl-N-formylglycinamide (FGAR). Formate is provided by PurU via hydrolysis of 10-formyl-tetrahydrofolate. The sequence is that of Formate-dependent phosphoribosylglycinamide formyltransferase from Xanthomonas euvesicatoria pv. vesicatoria (strain 85-10) (Xanthomonas campestris pv. vesicatoria).